The primary structure comprises 339 residues: Glutamyl-tRNA reductase (339 aa).

Substrate is bound by residues 50-53 (TCHR), serine 102, 107-109 (ETE), and glutamine 113. Cysteine 51 serves as the catalytic Nucleophile. Position 181 to 186 (181 to 186 (GYSDIN)) interacts with NADP(+).

The protein belongs to the glutamyl-tRNA reductase family. In terms of assembly, homodimer.

It carries out the reaction (S)-4-amino-5-oxopentanoate + tRNA(Glu) + NADP(+) = L-glutamyl-tRNA(Glu) + NADPH + H(+). The protein operates within porphyrin-containing compound metabolism; protoporphyrin-IX biosynthesis; 5-aminolevulinate from L-glutamyl-tRNA(Glu): step 1/2. In terms of biological role, catalyzes the NADPH-dependent reduction of glutamyl-tRNA(Glu) to glutamate 1-semialdehyde (GSA). This is Glutamyl-tRNA reductase from Chlamydia pneumoniae (Chlamydophila pneumoniae).